Here is a 290-residue protein sequence, read N- to C-terminus: MQPTVIETWPAPAKLNLFLYITGQRQDGYHLLQTLFQFLDYGDTLTIRPRNDDQINLLTPIDGVENEQNLIIRAARLLQQHCERRNIRPAQFGANIHIEKCLPMGGGLGGGSSNAATVLVALNHLWQSGLNVDTLAELGLQLGADVPVFIRGYAAFAEGIGEQLTPANPPEKWYLVAHPSISIATPLIFGDPELTRNSPVRDLETLLNQTFVNDCEAIARKRFREVEQLLSWLLEYAPARLTGTGACVFAEFDTEFAARQVLDQAPEWLNGFVARGVNVSPLQRRLSGQR.

The active site involves Lys14. Residue 103–113 coordinates ATP; it reads PMGGGLGGGSS. The active site involves Asp145.

This sequence belongs to the GHMP kinase family. IspE subfamily. Homodimer.

The catalysed reaction is 4-CDP-2-C-methyl-D-erythritol + ATP = 4-CDP-2-C-methyl-D-erythritol 2-phosphate + ADP + H(+). It participates in isoprenoid biosynthesis; isopentenyl diphosphate biosynthesis via DXP pathway; isopentenyl diphosphate from 1-deoxy-D-xylulose 5-phosphate: step 3/6. Its function is as follows. Catalyzes the phosphorylation of the position 2 hydroxy group of 4-diphosphocytidyl-2C-methyl-D-erythritol. In Pectobacterium atrosepticum (strain SCRI 1043 / ATCC BAA-672) (Erwinia carotovora subsp. atroseptica), this protein is 4-diphosphocytidyl-2-C-methyl-D-erythritol kinase.